Reading from the N-terminus, the 477-residue chain is Protein kinase C and casein kinase substrate in neurons protein 2 (477 aa).

One can recognise an F-BAR domain in the interval 11–282; it reads VEVSSDSFWE…AIKSADAMED (272 aa). Residues 25 to 274 adopt a coiled-coil conformation; it reads KRTVKRIDDG…SIYRELEYAI (250 aa). Basic and acidic residues-rich tracts occupy residues 163-176 and 186-216; these read CKEE…ETNS and QLKK…KDLD. Disordered regions lie at residues 163–218 and 314–412; these read CKEE…LDGT and RREK…PFDE. The span at 328–341 shows a compositional bias: low complexity; sequence GISQSGEQSSIQNQ. Positions 342–357 are enriched in polar residues; sequence HSSHLSVQSAQSTNNP. Positions 356 to 358 match the NPF1 motif; that stretch reads NPF. Basic and acidic residues predominate over residues 370-388; it reads TENKKIENVGSYEKTHPAE. A compositionally biased stretch (polar residues) spans 395-407; the sequence is NNPFNPSDTNGDN. Positions 396 to 398 match the NPF2 motif; sequence NPF. An NPF3 motif is present at residues 408–410; sequence NPF. The SH3 domain occupies 417–477; it reads TLEVRVRALY…YPANYVESVQ (61 aa).

This sequence belongs to the PACSIN family. In terms of assembly, interacts with adam13 through the SH3 domains. Phosphorylated. In terms of tissue distribution, ubiquitously expressed with higher expression in the ectoderm, the neuroectoderm, and dorsal mesoderm layers.

The protein localises to the cytoplasm. The protein resides in the cytoskeleton. It localises to the cytoplasmic vesicle membrane. It is found in the cell projection. Its subcellular location is the ruffle membrane. The protein localises to the early endosome. The protein resides in the recycling endosome membrane. It localises to the cell membrane. It is found in the membrane. Its subcellular location is the caveola. The protein localises to the cell junction. The protein resides in the adherens junction. In terms of biological role, regulates the morphogenesis and endocytosis of caveolae. Lipid-binding protein that is able to promote the tubulation of the phosphatidic acid-containing membranes it preferentially binds. Plays a role in intracellular vesicle-mediated transport. Involved in the endocytosis of cell-surface receptors like the EGF receptor, contributing to its internalization in the absence of EGF stimulus. The polypeptide is Protein kinase C and casein kinase substrate in neurons protein 2 (pacsin2) (Xenopus laevis (African clawed frog)).